Here is a 432-residue protein sequence, read N- to C-terminus: Trigger factor (432 aa).

The PPIase FKBP-type domain maps to 161-246 (EDRVTIDFTG…LKKVEERELP (86 aa)).

The protein belongs to the FKBP-type PPIase family. Tig subfamily.

The protein localises to the cytoplasm. The enzyme catalyses [protein]-peptidylproline (omega=180) = [protein]-peptidylproline (omega=0). Functionally, involved in protein export. Acts as a chaperone by maintaining the newly synthesized protein in an open conformation. Functions as a peptidyl-prolyl cis-trans isomerase. This chain is Trigger factor, found in Salmonella schwarzengrund (strain CVM19633).